Reading from the N-terminus, the 304-residue chain is RNA polymerase II holoenzyme cyclin-like subunit (304 aa).

In terms of domain architecture, Cyclin N-terminal spans 43–174 (TIHDSKANKQ…LIEELQSYLI (132 aa)).

The protein belongs to the cyclin family. Cyclin C subfamily. Component of the SRB8-11 complex, a regulatory module of the Mediator complex.

It is found in the nucleus. Component of the SRB8-11 complex. The SRB8-11 complex is a regulatory module of the Mediator complex which is itself involved in regulation of basal and activated RNA polymerase II-dependent transcription. The SRB8-11 complex may be involved in the transcriptional repression of a subset of genes regulated by Mediator. It may inhibit the association of the Mediator complex with RNA polymerase II to form the holoenzyme complex. The SRB8-11 complex phosphorylates the C-terminal domain (CTD) of the largest subunit of RNA polymerase II. The protein is RNA polymerase II holoenzyme cyclin-like subunit (SSN8) of Kluyveromyces lactis (strain ATCC 8585 / CBS 2359 / DSM 70799 / NBRC 1267 / NRRL Y-1140 / WM37) (Yeast).